The chain runs to 280 residues: Secreted RxLR effector protein 39 (280 aa).

The first 19 residues, 1–19, serve as a signal peptide directing secretion; that stretch reads MRGAYYVAIALLIVASCSA. Positions 49 to 70 match the RxLR-dEER motif; the sequence is RVLRGSRDLKNKWAVHAGGEDR. A disordered region spans residues 229–249; the sequence is EVKARSSKRQRTNPMLNNMDG.

This sequence belongs to the RxLR effector family.

The protein resides in the secreted. It localises to the host nucleus. Secreted effector that completely suppresses the host cell death induced by cell death-inducing proteins. The chain is Secreted RxLR effector protein 39 from Plasmopara viticola (Downy mildew of grapevine).